The following is a 452-amino-acid chain: UDP-N-acetylmuramoylalanine--D-glutamate ligase (452 aa).

An ATP-binding site is contributed by 119 to 125; it reads GSNGKTT.

It belongs to the MurCDEF family.

It localises to the cytoplasm. It carries out the reaction UDP-N-acetyl-alpha-D-muramoyl-L-alanine + D-glutamate + ATP = UDP-N-acetyl-alpha-D-muramoyl-L-alanyl-D-glutamate + ADP + phosphate + H(+). The protein operates within cell wall biogenesis; peptidoglycan biosynthesis. Cell wall formation. Catalyzes the addition of glutamate to the nucleotide precursor UDP-N-acetylmuramoyl-L-alanine (UMA). The polypeptide is UDP-N-acetylmuramoylalanine--D-glutamate ligase (Streptococcus pyogenes serotype M2 (strain MGAS10270)).